Reading from the N-terminus, the 1297-residue chain is DNA-directed RNA polymerase subunit beta'' (1297 aa).

Positions 220, 293, 300, and 303 each coordinate Zn(2+). A compositionally biased stretch (basic residues) spans 1278 to 1288; that stretch reads RRRKQNTKTRK. The segment at 1278 to 1297 is disordered; that stretch reads RRRKQNTKTRKNNLFSLNEK.

The protein belongs to the RNA polymerase beta' chain family. RpoC2 subfamily. In terms of assembly, in plastids the minimal PEP RNA polymerase catalytic core is composed of four subunits: alpha, beta, beta', and beta''. When a (nuclear-encoded) sigma factor is associated with the core the holoenzyme is formed, which can initiate transcription. Requires Zn(2+) as cofactor.

Its subcellular location is the plastid. The protein resides in the chloroplast. It carries out the reaction RNA(n) + a ribonucleoside 5'-triphosphate = RNA(n+1) + diphosphate. DNA-dependent RNA polymerase catalyzes the transcription of DNA into RNA using the four ribonucleoside triphosphates as substrates. This chain is DNA-directed RNA polymerase subunit beta'', found in Welwitschia mirabilis (Tree tumbo).